We begin with the raw amino-acid sequence, 469 residues long: Argininosuccinate lyase (469 aa).

Belongs to the lyase 1 family. Argininosuccinate lyase subfamily.

Its subcellular location is the cytoplasm. The catalysed reaction is 2-(N(omega)-L-arginino)succinate = fumarate + L-arginine. It functions in the pathway amino-acid biosynthesis; L-arginine biosynthesis; L-arginine from L-ornithine and carbamoyl phosphate: step 3/3. This chain is Argininosuccinate lyase, found in Burkholderia thailandensis (strain ATCC 700388 / DSM 13276 / CCUG 48851 / CIP 106301 / E264).